A 322-amino-acid polypeptide reads, in one-letter code: Secretion system apparatus protein SsaQ (322 aa).

This sequence belongs to the FliN/MopA/SpaO family.

Part of a type III secretion system. This is Secretion system apparatus protein SsaQ (ssaQ) from Salmonella typhimurium (strain LT2 / SGSC1412 / ATCC 700720).